We begin with the raw amino-acid sequence, 280 residues long: F-box only protein 27 (280 aa).

In terms of domain architecture, F-box spans 20–67; it reads VLDLSRLPPELLLLVLSHVPPRTLLMHCRRVCRAWRALVDGQALWLLL. The FBA domain maps to 101–277; that stretch reads FCALRPLGRN…VTNSSVIIRV (177 aa).

As to quaternary structure, part of a SCF (SKP1-cullin-F-box) protein ligase complex. Interacts with SKP1 and CUL1. Detected in brain, heart and muscle.

In terms of biological role, substrate-recognition component of the SCF (SKP1-CUL1-F-box protein)-type E3 ubiquitin ligase complex. Able to recognize and bind complex-type oligosaccharides. The protein is F-box only protein 27 (Fbxo27) of Mus musculus (Mouse).